A 224-amino-acid chain; its full sequence is Thymidine kinase, cytosolic (224 aa).

Ser13 carries the phosphoserine modification. ATP contacts are provided by residues 26 to 33 (GPMFSGKS), 58 to 60 (DTR), and 98 to 101 (DEGQ). Catalysis depends on Glu99, which acts as the Proton acceptor. Phe129 contributes to the substrate binding site. The Zn(2+) site is built by Cys154 and Cys157. Substrate is bound by residues 173–177 (VEVIG) and Tyr182. Zn(2+) is bound by residues Cys186 and Cys189. The KEN box signature appears at 203 to 205 (KEN).

Belongs to the thymidine kinase family. As to quaternary structure, homotetramer. Tetramerization from dimerization is induced by ATP and increases catalytic efficiency due to a high affinity for thymidine. Tetramerization is inhibited by phosphorylation at Ser-13. Interacts (via the KEN box) with FZR1. Post-translationally, phosphorylated on Ser-13 in mitosis. Phosphorylation of Ser-13 by CDK1 during mitosis reduces homotetramerization and catalytic efficiency when DNA replication is complete and intracellular TK1 is still present at a high level. Polyubiquitinated. Postmitosis, ubiquitination leads to proteasomal degradation. The KEN box sequence located at the C-terminal region targets for degradation by the anaphase promoting complex (APC/C) activated and rate-limited by FZR1.

Its subcellular location is the cytoplasm. The catalysed reaction is thymidine + ATP = dTMP + ADP + H(+). In terms of biological role, cell-cycle-regulated enzyme of importance in nucleotide metabolism. Catalyzes the first enzymatic step in the salvage pathway converting thymidine into thymidine monophosphate. Transcriptional regulation limits expression to the S phase of the cell cycle and transient expression coincides with the oscillation in the intracellular dTTP concentration. The protein is Thymidine kinase, cytosolic (TK1) of Gallus gallus (Chicken).